The primary structure comprises 728 residues: Hepatocyte growth factor (728 aa).

The N-terminal stretch at 1 to 32 (MMWGTKLLPVLLLQHVLLHLLLLPVTIPYAEG) is a signal peptide. A Pyrrolidone carboxylic acid modification is found at Gln33. The PAN domain occupies 38–124 (NTLHEFKKSA…HEFDLYENKD (87 aa)). 8 cysteine pairs are disulfide-bonded: Cys71/Cys97, Cys75/Cys85, Cys129/Cys207, Cys150/Cys190, Cys178/Cys202, Cys212/Cys289, Cys233/Cys272, and Cys261/Cys284. Kringle domains are found at residues 129–207 (CIIG…IPQC) and 212–289 (CMTC…IKMC). An N-linked (GlcNAc...) asparagine glycan is attached at Asn295. Cystine bridges form between Cys306-Cys384, Cys327-Cys366, Cys355-Cys378, Cys392-Cys470, Cys413-Cys453, Cys441-Cys465, Cys488-Cys607, Cys520-Cys536, Cys615-Cys682, Cys645-Cys661, and Cys672-Cys700. 2 consecutive Kringle domains span residues 306 to 384 (CIKG…IPKC) and 392 to 470 (CYRG…ISRC). An N-linked (GlcNAc...) asparagine glycan is attached at Asn403. Positions 496 to 724 (VVNGIPTQTT…YAKWIHKVIL (229 aa)) constitute a Peptidase S1 domain. Residues Asn569 and Asn656 are each glycosylated (N-linked (GlcNAc...) asparagine).

Belongs to the peptidase S1 family. Plasminogen subfamily. Dimer of an alpha chain and a beta chain linked by a disulfide bond. Interacts with SRPX2; the interaction increases HGF mitogenic activity. In terms of processing, the single-chain precursor undergoes proteolytic processing by TMPRSS13 resulting in an active two-chain form. The single-chain precursor undergoes proteolytic processing by HGFAC resulting in an active two-chain form.

Functionally, potent mitogen for mature parenchymal hepatocyte cells, seems to be a hepatotrophic factor, and acts as a growth factor for a broad spectrum of tissues and cell types. Activating ligand for the receptor tyrosine kinase MET by binding to it and promoting its dimerization. Activates MAPK signaling following TMPRSS13 cleavage and activation. The polypeptide is Hepatocyte growth factor (Hgf) (Rattus norvegicus (Rat)).